A 360-amino-acid polypeptide reads, in one-letter code: WAT1-related protein At3g28070 (360 aa).

10 helical membrane-spanning segments follow: residues 15–35 (AVFLTAMLVVETSVVGISTLF), 45–65 (IYPFLGYSYLLASLLLLPSLF), 84–104 (IGLLGFLGSMYVITGYIGIEY), 108–128 (TLASAINNITPALTFILAIIF), 140–160 (SLAKLMGTILSLIGALVVIFY), 190–210 (WLIGGALLTMQGIFVSVSFIL), 224–244 (VSFLYTVCVSIVTSTIGLVVE), 248–268 (PSVWIIHFDITLITIVTMAIV), 286–306 (LYLAIFKPLSILIAVVMGAIF), and 311–331 (LYLGCLIGGILITLGFYAVMW). The EamA domain maps to 30–158 (GISTLFKFAT…LSLIGALVVI (129 aa)).

The protein belongs to the drug/metabolite transporter (DMT) superfamily. Plant drug/metabolite exporter (P-DME) (TC 2.A.7.4) family.

Its subcellular location is the membrane. The chain is WAT1-related protein At3g28070 from Arabidopsis thaliana (Mouse-ear cress).